Here is a 183-residue protein sequence, read N- to C-terminus: Helofensin-2 (183 aa).

The N-terminal stretch at 1–26 (MQMDWLFIAVISGIGLLSSGVPGTQG) is a signal peptide. Residues 27–64 (AYTTEQCRALNGSCNFYACFPKNVIIGKCDWWGWSCCA) form a C(6)C(4)C(9)C(6)CC 1; approximate repeat. A C(6)C(4)C(9)C(6)CC 2; approximate repeat occupies 65-101 (RTPLERCTAKKGTCTKTGCTKTDTDHGPCDGGAQCCQ). One copy of the C(6)C(4)C(9)C(6)CC 3; approximate repeat lies at 102 to 139 (RDPVKYCKFHGNVCGRGKCPMDHIPIGEQCMPGYPCCK). Residues 140–177 (RDGPAYCKSKGGKCLRRCSQIVPTDIIGVCADGVPCCK) form a C(6)C(4)C(9)C(6)CC 4; approximate repeat.

It belongs to the beta-defensin family. Helofensin subfamily. Expressed by the mandibular venom gland.

The protein localises to the secreted. Its function is as follows. Lethal toxin which possesses an inhibitory effect on direct electrical stimulation of the isolated hemi-diaphragm of mice. Neither hemorrhagic nor hemolytic activities are detected. Phospholipase A2 activity, proteolytic activity and arginine esterolytic activity are absent. In Heloderma suspectum cinctum (Banded Gila monster), this protein is Helofensin-2.